Consider the following 179-residue polypeptide: Large ribosomal subunit protein uL5 (179 aa).

Belongs to the universal ribosomal protein uL5 family. Part of the 50S ribosomal subunit; part of the 5S rRNA/L5/L18/L25 subcomplex. Contacts the 5S rRNA and the P site tRNA. Forms a bridge to the 30S subunit in the 70S ribosome.

Its function is as follows. This is one of the proteins that bind and probably mediate the attachment of the 5S RNA into the large ribosomal subunit, where it forms part of the central protuberance. In the 70S ribosome it contacts protein S13 of the 30S subunit (bridge B1b), connecting the 2 subunits; this bridge is implicated in subunit movement. Contacts the P site tRNA; the 5S rRNA and some of its associated proteins might help stabilize positioning of ribosome-bound tRNAs. In Methylococcus capsulatus (strain ATCC 33009 / NCIMB 11132 / Bath), this protein is Large ribosomal subunit protein uL5.